Reading from the N-terminus, the 300-residue chain is B1 kinase (300 aa).

The region spanning 16–282 (WVVGPLIGKG…ITMVNSLTYF (267 aa)) is the Protein kinase domain. Residues 22–30 (IGKGGFGSI) and lysine 45 each bind ATP. Asparagine 147 (proton acceptor) is an active-site residue.

The protein belongs to the protein kinase superfamily. Ser/Thr protein kinase family. Poxviruses subfamily. Interacts with host JIP1; this interaction increases the amount of MAPK bound to JIP1 and subsequently increases the activity of transcription factors, such as JUN, that respond to these complexes. Interacts with protein OPG198; this interaction inhibits the repressive activity of OPG198 pseudokinase on viral replication factory formation. The cofactor is Mg(2+). Post-translationally, autophosphorylated.

The protein resides in the virion. Its subcellular location is the host cytoplasm. It catalyses the reaction L-seryl-[protein] + ATP = O-phospho-L-seryl-[protein] + ADP + H(+). The enzyme catalyses L-threonyl-[protein] + ATP = O-phospho-L-threonyl-[protein] + ADP + H(+). Its function is as follows. Essential serine/threonine-protein kinase that plays different role in the viral life cycle. Phosphorylates the host small ribosomal protein RACK1 thereby customizing the ribosomes to a state optimal for viral mRNAs (which contain poly-A leaders) but not for host mRNAs. Facilitates viral DNA replication by inhibiting host BANF1, a cellular host defense responsive to foreign DNA. Phosphorylates host BANF1 on serine and threonine residues; this leads to BANF1 relocalization to the cytoplasm, loss of dimerization and impaired DNA binding activity. Indeed, BANF1 activity depends on its DNA-binding property which is blocked by VPK1-mediated phosphorylation. Required for viral intermediate genes expression, probably by inhibiting host BANF1. Modulates cellular responses via host JUN by two different mechanisms, either by direct phosphorylation or by modulation of upstream JIP1-MAPK complexes. Seems to participate in the accumulation/processing of late proteins and thus in virion maturation. In addition, inhibits B12 repressive activity on viral DNA replication via a phosphorylation-dependent mechanism. The sequence is that of B1 kinase (OPG187) from Homo sapiens (Human).